The sequence spans 165 residues: Protein NKG7 (165 aa).

4 helical membrane passes run 9–29, 61–81, 92–112, and 133–153; these read LLTSSLGLVSLLVAVSTNFWF, FCILAVLWGLISTAFLVMSCI, IVSTFMGFAGALSLIVAMTVY, and FYLGWVSTLLFLCTGGLSLGA.

It belongs to the PMP-22/EMP/MP20 family.

It localises to the cell membrane. It is found in the cytolytic granule membrane. Functionally, regulates cytotoxic granule exocytosis in effector lymphocytes, thus acting as a critical mediator of inflammation in a broad range of infectious and non-infectious diseases. Essential for cytotoxic degranulation of natural killer (NK) cells and CD8(+) T-cells and for the activation of CD4(+) T-cells following infection. Plays a critical role in CD8(+) T-cell and NK cell-mediated cytolysis of target cells and contributes to the cytolytic activity via the perforin/granzyme pathway by enhancing exocytosis of LAMP1-carrying lytic granules. Contributes to NK cell-mediated control of cancer metastasis. The sequence is that of Protein NKG7 (NKG7) from Bos taurus (Bovine).